A 310-amino-acid chain; its full sequence is Carbamate kinase-like protein YqeA (310 aa).

Belongs to the carbamate kinase family.

The sequence is that of Carbamate kinase-like protein YqeA (yqeA) from Escherichia coli (strain K12).